The primary structure comprises 342 residues: Probable tyrosine--tRNA ligase, cytoplasmic (342 aa).

Residue Y48 participates in L-tyrosine binding. The 'HIGH' region motif lies at 53-61; that stretch reads ITGKPHIGY. Residues Y175, Q179, D182, and Q197 each coordinate L-tyrosine. The short motif at 231–235 is the 'KMSKS' region element; the sequence is KMSSS.

Belongs to the class-I aminoacyl-tRNA synthetase family. As to quaternary structure, homodimer.

The protein resides in the cytoplasm. The enzyme catalyses tRNA(Tyr) + L-tyrosine + ATP = L-tyrosyl-tRNA(Tyr) + AMP + diphosphate + H(+). The polypeptide is Probable tyrosine--tRNA ligase, cytoplasmic (Enterocytozoon bieneusi (strain H348) (Microsporidian parasite)).